The primary structure comprises 431 residues: Citrate synthase (431 aa).

Active-site residues include H306 and D364.

The protein belongs to the citrate synthase family.

The enzyme catalyses oxaloacetate + acetyl-CoA + H2O = citrate + CoA + H(+). Its pathway is carbohydrate metabolism; tricarboxylic acid cycle; isocitrate from oxaloacetate: step 1/2. The protein is Citrate synthase (gltA) of Bartonella henselae (strain ATCC 49882 / DSM 28221 / CCUG 30454 / Houston 1) (Rochalimaea henselae).